A 280-amino-acid chain; its full sequence is 4-diphosphocytidyl-2-C-methyl-D-erythritol kinase (280 aa).

Lys8 is a catalytic residue. Residue 91–101 participates in ATP binding; it reads PVAAGLAGGSS. Residue Asp133 is part of the active site.

Belongs to the GHMP kinase family. IspE subfamily.

The catalysed reaction is 4-CDP-2-C-methyl-D-erythritol + ATP = 4-CDP-2-C-methyl-D-erythritol 2-phosphate + ADP + H(+). Its pathway is isoprenoid biosynthesis; isopentenyl diphosphate biosynthesis via DXP pathway; isopentenyl diphosphate from 1-deoxy-D-xylulose 5-phosphate: step 3/6. In terms of biological role, catalyzes the phosphorylation of the position 2 hydroxy group of 4-diphosphocytidyl-2C-methyl-D-erythritol. This chain is 4-diphosphocytidyl-2-C-methyl-D-erythritol kinase, found in Clostridium kluyveri (strain NBRC 12016).